The following is a 169-amino-acid chain: X polypeptide (169 aa).

Belongs to the IagB/IpgF/P19 family.

The protein is X polypeptide (X) of Escherichia coli.